A 413-amino-acid polypeptide reads, in one-letter code: Imidazolonepropionase (413 aa).

Fe(3+) is bound by residues His79 and His81. His79 and His81 together coordinate Zn(2+). 3 residues coordinate 4-imidazolone-5-propanoate: Arg88, Tyr151, and His184. Tyr151 contacts N-formimidoyl-L-glutamate. Residue His248 participates in Fe(3+) binding. His248 is a Zn(2+) binding site. Glu251 lines the 4-imidazolone-5-propanoate pocket. Asp322 is a binding site for Fe(3+). A Zn(2+)-binding site is contributed by Asp322. N-formimidoyl-L-glutamate-binding residues include Asn324 and Gly326. Residue Ser327 participates in 4-imidazolone-5-propanoate binding.

It belongs to the metallo-dependent hydrolases superfamily. HutI family. It depends on Zn(2+) as a cofactor. Fe(3+) serves as cofactor.

Its subcellular location is the cytoplasm. The enzyme catalyses 4-imidazolone-5-propanoate + H2O = N-formimidoyl-L-glutamate. Its pathway is amino-acid degradation; L-histidine degradation into L-glutamate; N-formimidoyl-L-glutamate from L-histidine: step 3/3. Functionally, catalyzes the hydrolytic cleavage of the carbon-nitrogen bond in imidazolone-5-propanoate to yield N-formimidoyl-L-glutamate. It is the third step in the universal histidine degradation pathway. In Fusobacterium nucleatum subsp. nucleatum (strain ATCC 25586 / DSM 15643 / BCRC 10681 / CIP 101130 / JCM 8532 / KCTC 2640 / LMG 13131 / VPI 4355), this protein is Imidazolonepropionase.